A 928-amino-acid polypeptide reads, in one-letter code: Mitogen-activated protein kinase kinase kinase dlk-1 (928 aa).

The segment at 1–72 (MTSTTMVTTL…GQKEGSPDPK (72 aa)) is disordered. A compositionally biased stretch (polar residues) spans 42-52 (LVTQSAPNTPI). Over residues 53-69 (QHREQANAEFGQKEGSP) the composition is skewed to basic and acidic residues. One can recognise a Protein kinase domain in the interval 135–377 (ISELEWLGSG…FSHIRQHWEI (243 aa)). Residues 141-149 (LGSGSQGAV) and Lys-162 contribute to the ATP site. Asp-246 acts as the Proton acceptor in catalysis. The interval 459–480 (LQGCFTELKLKESELAEWEKDL) is leucine-zipper. Disordered regions lie at residues 483 to 575 (REQW…DAIR), 644 to 696 (RRVS…PSRN), and 802 to 845 (ENAN…SMES). Over residues 509–519 (GYDDMSSDEDV) the composition is skewed to acidic residues. Residues 530-557 (SNTSSSSGVQSSPFSRQSSSRSSAGQQT) show a composition bias toward low complexity. An important for interaction between isoform a and isoform c region spans residues 605 to 814 (SAGAGSCTAI…NDVDLTSSMD (210 aa)). Residues 647-656 (STSVNKSTAV) are compositionally biased toward polar residues. Residues 677 to 695 (SCSSPRSSSKLNRSSYPSR) are compositionally biased toward low complexity. Residues 823–833 (ADVESSEEDEG) show a composition bias toward acidic residues. Residues Ser-874 and Ser-878 each carry the phosphoserine modification. The short motif at 874–879 (SDGLSD) is the SDGLSD hexapeptide element.

The protein belongs to the protein kinase superfamily. STE Ser/Thr protein kinase family. MAP kinase kinase kinase subfamily. As to quaternary structure, homooligomer (via leucine zipper domain and hexapeptide motif). Isoform a (via leucine zipper domain) forms a heterooligomer with isoform c (via leucine zipper domain). Isoform c does not self-associate. It depends on Mg(2+) as a cofactor. Ubiquitinated by rpm-1. Negatively regulated by ubiquitination by fsn-1 bound rpm-1, followed by degradation. In terms of processing, phosphorylation at Ser-874 and/or at Ser-878 abolishes interaction with isoform c and promotes binding to isoform a kinase domain (likely in trans) resulting in isoform a self-association and activation. Expressed in nerve ring, nerve cord, neurons, and pharynx.

It is found in the synapse. Its subcellular location is the cytoplasm. The protein resides in the cell projection. It localises to the axon. The protein localises to the dendrite. It is found in the cilium. It carries out the reaction L-seryl-[protein] + ATP = O-phospho-L-seryl-[protein] + ADP + H(+). The catalysed reaction is L-threonyl-[protein] + ATP = O-phospho-L-threonyl-[protein] + ADP + H(+). With respect to regulation, inactive when associated with isoform c. Dissociation from isoform c, which is dependent on the phosphorylation of the C-terminal hexapeptide, results in self-association and activation. Transient increase in Ca(2+) levels caused by axonal injury or synaptic activity triggers the dissociation of isoform a from isoform c; the dissociation may be influenced by the phosphorylation status of the C-terminal hexapeptide. Component of a MAP kinase pathway that functions presynaptically to regulate synaptic architecture and presynaptic differentiation. Phosphorylates and activates mkk-4. Has a role in axonal regrowth following injury and synaptogenesis. Plays a role in modulating polymerization of neuronal microtubules. Also promotes tubulin post-translational modifications that protect microtubules. Plays a role in cilium length regulation, possibly by reducing rab-5 mediated endocytosis, and may also have a role in intraflagellar transport in cilia. Plays a role in the formation of muscle connections, also called muscle arm extensions, between the body wall and the motor axons in the dorsal and ventral cord. Its function is as follows. Has a role in synapse and axon development, and in axonal regrowth following injury. Functionally, by forming heterooligomers with isoform a, acts as an inhibitor of isoform a activation. Its inhibitory function is independent of its catalytic activity. In Caenorhabditis elegans, this protein is Mitogen-activated protein kinase kinase kinase dlk-1 (dlk-1).